A 305-amino-acid chain; its full sequence is Ribosomal protein L11 methyltransferase (305 aa).

Positions 152, 173, 195, and 237 each coordinate S-adenosyl-L-methionine.

The protein belongs to the methyltransferase superfamily. PrmA family.

The protein resides in the cytoplasm. The enzyme catalyses L-lysyl-[protein] + 3 S-adenosyl-L-methionine = N(6),N(6),N(6)-trimethyl-L-lysyl-[protein] + 3 S-adenosyl-L-homocysteine + 3 H(+). Its function is as follows. Methylates ribosomal protein L11. This Hamiltonella defensa subsp. Acyrthosiphon pisum (strain 5AT) protein is Ribosomal protein L11 methyltransferase.